The sequence spans 510 residues: NAD(P)H-quinone oxidoreductase subunit 2, chloroplastic (510 aa).

13 helical membrane passes run 26-46 (LFDGSFIFPECILIFGLILLL), 57-77 (IPWLYFISSTSLVMSIMALLF), 99-119 (IFQVLILLCSTLCIPLSVEYI), 124-144 (MAITEFLLFVLTATLGGMFLC), 149-169 (LITIFVAPECFSFCSYLLSGY), 184-204 (LLMGGASSSILVHGFSWLYGL), 227-247 (PGISIALIFITVGIGFKLSPA), 295-315 (WHLLLEILALLSMILGNLIAI), 323-343 (MLAYSSIGQIGYIIIGIIVGD), 354-374 (YMLFYISMNLGTFACIILFGL), 395-415 (ALSLALCLLSLGGLPPLAGFF), 418-438 (LYLFWCGWQAGLYFLVLIALV), and 484-504 (MIVCVIASTIPGISMNPIIAI).

This sequence belongs to the complex I subunit 2 family. In terms of assembly, NDH is composed of at least 16 different subunits, 5 of which are encoded in the nucleus.

It is found in the plastid. Its subcellular location is the chloroplast thylakoid membrane. It carries out the reaction a plastoquinone + NADH + (n+1) H(+)(in) = a plastoquinol + NAD(+) + n H(+)(out). It catalyses the reaction a plastoquinone + NADPH + (n+1) H(+)(in) = a plastoquinol + NADP(+) + n H(+)(out). Its function is as follows. NDH shuttles electrons from NAD(P)H:plastoquinone, via FMN and iron-sulfur (Fe-S) centers, to quinones in the photosynthetic chain and possibly in a chloroplast respiratory chain. The immediate electron acceptor for the enzyme in this species is believed to be plastoquinone. Couples the redox reaction to proton translocation, and thus conserves the redox energy in a proton gradient. In Trachelium caeruleum (Blue throatwort), this protein is NAD(P)H-quinone oxidoreductase subunit 2, chloroplastic.